Reading from the N-terminus, the 154-residue chain is Protein X (154 aa).

The segment at 68 to 117 (PCALRFTSARRMETTVNAHQFLPKVLHKRTLGLSVMSTTDLEAYFKDCLF) is mitochondrial targeting sequence.

The protein belongs to the orthohepadnavirus protein X family. May form homodimer. May interact with host CEBPA, CFLAR, CREB1, DDB1, E4F1, HBXIP, HSPD1/HSP60, NFKBIA, POLR2E and SMAD4. Interacts with host SMC5-SMC6 complex and induces its degradation. Interacts with host TRPC4AP; leading to prevent ubiquitination of TRPC4AP. Interacts with host PLSCR1; this interaction promotes ubiquitination and degradation of HBx and impairs HBx-mediated cell proliferation. A fraction may be phosphorylated in insect cells and HepG2 cells, a human hepatoblastoma cell line. Phosphorylated in vitro by host protein kinase C or mitogen-activated protein kinase. N-acetylated in insect cells.

Its subcellular location is the host cytoplasm. It is found in the host nucleus. It localises to the host mitochondrion. Multifunctional protein that plays a role in silencing host antiviral defenses and promoting viral transcription. Does not seem to be essential for HBV infection. May be directly involved in development of cirrhosis and liver cancer (hepatocellular carcinoma). Most of cytosolic activities involve modulation of cytosolic calcium. The effect on apoptosis is controversial depending on the cell types in which the studies have been conducted. May induce apoptosis by localizing in mitochondria and causing loss of mitochondrial membrane potential. May also modulate apoptosis by binding host CFLAR, a key regulator of the death-inducing signaling complex (DISC). Promotes viral transcription by using the host E3 ubiquitin ligase DDB1 to target the SMC5-SMC6 complex to proteasomal degradation. This host complex would otherwise bind to viral episomal DNA, and prevents its transcription. Moderately stimulates transcription of many different viral and cellular transcription elements. Promoters and enhancers stimulated by HBx contain DNA binding sites for NF-kappa-B, AP-1, AP-2, c-EBP, ATF/CREB, or the calcium-activated factor NF-AT. This is Protein X from Hepatitis B virus genotype D (isolate France/alpha1/1989) (HBV-D).